The primary structure comprises 186 residues: TATA-box-binding protein D (186 aa).

Repeat copies occupy residues 10–86 and 101–179.

Belongs to the TBP family.

Its function is as follows. General factor that plays a role in the activation of archaeal genes transcribed by RNA polymerase. Binds specifically to the TATA box promoter element which lies close to the position of transcription initiation. This chain is TATA-box-binding protein D (tbpD), found in Halobacterium salinarum (strain ATCC 700922 / JCM 11081 / NRC-1) (Halobacterium halobium).